We begin with the raw amino-acid sequence, 123 residues long: Small ribosomal subunit protein uS12c (123 aa).

The protein belongs to the universal ribosomal protein uS12 family. In terms of assembly, part of the 30S ribosomal subunit.

The protein resides in the plastid. Its subcellular location is the chloroplast. Its function is as follows. With S4 and S5 plays an important role in translational accuracy. Located at the interface of the 30S and 50S subunits. This Pinus thunbergii (Japanese black pine) protein is Small ribosomal subunit protein uS12c (rps12).